The chain runs to 360 residues: Peptide chain release factor 1 (360 aa).

Position 237 is an N5-methylglutamine (Gln237).

Belongs to the prokaryotic/mitochondrial release factor family. In terms of processing, methylated by PrmC. Methylation increases the termination efficiency of RF1.

It localises to the cytoplasm. Its function is as follows. Peptide chain release factor 1 directs the termination of translation in response to the peptide chain termination codons UAG and UAA. This Nitrosococcus oceani (strain ATCC 19707 / BCRC 17464 / JCM 30415 / NCIMB 11848 / C-107) protein is Peptide chain release factor 1.